Reading from the N-terminus, the 343-residue chain is Phosphoglycerate mutase-like protein 2 (343 aa).

The transit peptide at 1–35 (MIHQSMTSNLSFYISSVSHLSSPLPSLSRLSLRCC) directs the protein to the chloroplast. Catalysis depends on histidine 65, which acts as the Tele-phosphohistidine intermediate. Residue glutamate 177 is the Proton donor/acceptor of the active site. A disordered region spans residues 322–343 (MTNYPGTILTGEDASSDIADQK).

The protein belongs to the phosphoglycerate mutase family.

Its subcellular location is the plastid. It localises to the chloroplast. Functionally, may play a role in carbohydrates metabolism. The polypeptide is Phosphoglycerate mutase-like protein 2 (Arabidopsis thaliana (Mouse-ear cress)).